The primary structure comprises 594 residues: MSWLFGLNKGQQGPPSVPGFPEPPSPPGGSGDGGDKNKPKDKWSNFDPTGLERAAKAARELDQSRHAKEALNLAKVQEETLQLEQQSKIKEYEAAVEQLKNEQIRVQAEERRKTLNEETKQHQARAQYQDKLARQRYEDQLRQQQLQNEENLRRQEESVQKQEAMRKATVEHEMELRHKNEMLRIEAEARARAKVERENADIIRENIRLKAAEHRQTVLESIKTAGTVFGEGFRAFISDWDKVTATVAGLSLLAVGIYTAKNATGVAGRYIEARLGKPSLVRDTSRFTVAEAVKHPVKISKRLLSKIQDALEGVILSPKLEERVRDIAIATRNTKANKGLYRNILMYGPPGTGKTLFAKKLAMHSGMDYAIMTGGDVAPMGREGVTAMHKVFDWAGTSKRGLLLFVDEADAFLRKRSTEKISEDLRATLNAFLYRTGEQSNKFMLVLASNQPEQFDWAINDRIDEIVHFDLPGLEERERLVRLYFDKYVLQPASEGKQRLKVAQFDYGKKCSDLAQLTEGMSGREISKLGVAWQAAAYASEDGILNEAMIDARVADAIRQHQQKMEWLKAEGKENAAKESGKNPLQPLLEGTPV.

The segment at 1-50 (MSWLFGLNKGQQGPPSVPGFPEPPSPPGGSGDGGDKNKPKDKWSNFDPTG) is disordered. Over 1 to 242 (MSWLFGLNKG…FRAFISDWDK (242 aa)) the chain is Mitochondrial intermembrane. A compositionally biased stretch (pro residues) spans 15–27 (PSVPGFPEPPSPP). A compositionally biased stretch (basic and acidic residues) spans 33-44 (GGDKNKPKDKWS). Residues 51–213 (LERAAKAARE…RENIRLKAAE (163 aa)) adopt a coiled-coil conformation. The helical transmembrane segment at 243–260 (VTATVAGLSLLAVGIYTA) threads the bilayer. The Mitochondrial matrix segment spans residues 261–594 (KNATGVAGRY…LQPLLEGTPV (334 aa)). Residue 348-355 (GPPGTGKT) coordinates ATP. Residues 571 to 581 (EGKENAAKESG) are compositionally biased toward basic and acidic residues. Residues 571–594 (EGKENAAKESGKNPLQPLLEGTPV) form a disordered region.

This sequence belongs to the AAA ATPase family.

Its subcellular location is the mitochondrion inner membrane. It is found in the mitochondrion matrix. The protein localises to the mitochondrion nucleoid. Its function is as follows. Essential for mitochondrial network organization, mitochondrial metabolism and cell growth at organism and cellular level. May play an important role in mitochondrial protein synthesis. May also participate in mitochondrial DNA replication. May bind to mitochondrial DNA D-loops and contribute to nucleoid stability. Required for enhanced channeling of cholesterol for hormone-dependent steroidogenesis. The chain is ATPase family AAA domain-containing protein 3 (atad3) from Xenopus tropicalis (Western clawed frog).